A 582-amino-acid polypeptide reads, in one-letter code: Protein NUCLEAR FUSION DEFECTIVE 4 (582 aa).

A disordered region spans residues 1–20 (MRPRIRDVSDKLRPNRASFD). The next 8 helical transmembrane spans lie at 46 to 66 (VLVA…FSAY), 100 to 120 (IALG…MGFV), 132 to 152 (IITL…LSIC), 172 to 192 (LALS…SLAF), 202 to 222 (LYLL…LYPV), 243 to 263 (VFTI…LSSS), 270 to 290 (LNFI…LLVY), and 358 to 378 (LEFW…LVYS). N391 is a glycosylation site (N-linked (GlcNAc...) asparagine). A run of 5 helical transmembrane segments spans residues 395–412 (LVTI…LSAA), 425–445 (TGWF…LAVS), 458–478 (LIGL…SDLF), 489–509 (ILIT…ASIY), and 536–556 (TFVF…SLYI).

The protein resides in the membrane. Its function is as follows. Required for karyogamy during female gametophyte development, when the two polar nuclei fuse to form the diploid central cell nucleus. The protein is Protein NUCLEAR FUSION DEFECTIVE 4 of Arabidopsis thaliana (Mouse-ear cress).